The sequence spans 315 residues: MASRDFLGRFGGEKGAASDKAGGGAGEADEVAELSLGLSLGGCFGANSGRDAKKPRLVRSSSLAAMCSLPGTSDDLAAATPPPAPLMRTSSLPTETEEERWRRREMQSLKRLQAKRKRLERRTSMNSGKSGGSSSRDDAQEPLYPSAFQLRRSVVDQGNPSSSMPEQGSGDGAEVKSTSSMEISSDNNNNASNQNKSLPPPAPSPAAGKLPNGIVKEQPPLRTLRSLTMRTTSTGDLRKSMMEDMPMVSSKVDGPNGKKIDGFLYKYRKGEEVRIVCVCHGNFLTPAEFVKHAGGGDVTNPLRHIVVNPSPSVFL.

Disordered stretches follow at residues 1-28 (MASR…AGEA), 68-142 (SLPG…AQEP), and 156-237 (DQGN…TGDL). Residues 99 to 108 (ERWRRREMQS) are compositionally biased toward basic and acidic residues. Residues 156-166 (DQGNPSSSMPE) are compositionally biased toward polar residues. 2 stretches are compositionally biased toward low complexity: residues 184-197 (SSDN…QNKS) and 221-234 (LRTL…TTST).

The protein belongs to the Ninja family.

It localises to the nucleus. In Triticum aestivum (Wheat), this protein is Ninja-family protein 1 (AFP-A1).